The primary structure comprises 367 residues: Alanine racemase (367 aa).

The active-site Proton acceptor; specific for D-alanine is the lysine 40. Lysine 40 carries the N6-(pyridoxal phosphate)lysine modification. Arginine 136 contributes to the substrate binding site. Residue tyrosine 263 is the Proton acceptor; specific for L-alanine of the active site. Methionine 310 contributes to the substrate binding site.

The protein belongs to the alanine racemase family. Pyridoxal 5'-phosphate serves as cofactor.

The enzyme catalyses L-alanine = D-alanine. Its pathway is amino-acid biosynthesis; D-alanine biosynthesis; D-alanine from L-alanine: step 1/1. In terms of biological role, catalyzes the interconversion of L-alanine and D-alanine. May also act on other amino acids. In Lactococcus lactis subsp. cremoris (strain MG1363), this protein is Alanine racemase (alr).